Consider the following 237-residue polypeptide: MTNELVYEGKAKRLFKTEEAGVLRVAYKDDATALNGVRKESFAGKGELNNQITSLIFSHLAGAGIESHFIRAISETEQLVKEVSIIPLEVVVRNVMAGSLAKRLGKEEGELIPNAIVEFYYKDDALDDPFINDDHVLYLELATTSEMDIIRQAARSINKVLQELFNQMNITLIDFKLEFGRDATGNILLADEISPDTCRLWDKETNQKLDKDVFRRNIGNLTDVYTEVLNRLKQVQN.

It belongs to the SAICAR synthetase family.

The enzyme catalyses 5-amino-1-(5-phospho-D-ribosyl)imidazole-4-carboxylate + L-aspartate + ATP = (2S)-2-[5-amino-1-(5-phospho-beta-D-ribosyl)imidazole-4-carboxamido]succinate + ADP + phosphate + 2 H(+). The protein operates within purine metabolism; IMP biosynthesis via de novo pathway; 5-amino-1-(5-phospho-D-ribosyl)imidazole-4-carboxamide from 5-amino-1-(5-phospho-D-ribosyl)imidazole-4-carboxylate: step 1/2. The sequence is that of Phosphoribosylaminoimidazole-succinocarboxamide synthase from Listeria monocytogenes serotype 4b (strain CLIP80459).